Reading from the N-terminus, the 654-residue chain is Cysteine-rich receptor-like protein kinase 40 (654 aa).

Positions 1–27 are cleaved as a signal peptide; it reads MGKCSALMIFLSSSLLLVLQTLHVVNA. Gnk2-homologous domains follow at residues 28–131 and 143–250; these read VKCF…NQST and WPSP…LYSF. The Extracellular segment spans residues 28-287; that stretch reads VKCFGNSFNG…VKKGKSIGYG (260 aa). Residues asparagine 38, asparagine 65, asparagine 128, asparagine 154, asparagine 167, and asparagine 256 are each glycosylated (N-linked (GlcNAc...) asparagine). The chain crosses the membrane as a helical span at residues 288-308; sequence GIIAIVVVFTFINLLVFIGFI. The Cytoplasmic portion of the chain corresponds to 309 to 654; that stretch reads KVYARRGKLN…DDVFTELSCR (346 aa). The Protein kinase domain occupies 348-619; it reads FSSENTLGQG…VIIWLGSETI (272 aa). Residues 354-362 and lysine 376 each bind ATP; that span reads LGQGGFGTV. At tyrosine 421 the chain carries Phosphotyrosine. Aspartate 473 functions as the Proton acceptor in the catalytic mechanism. Serine 477 carries the phosphoserine modification. At threonine 513 the chain carries Phosphothreonine. The residue at position 521 (tyrosine 521) is a Phosphotyrosine.

Belongs to the protein kinase superfamily. Ser/Thr protein kinase family. CRK subfamily.

Its subcellular location is the membrane. It catalyses the reaction L-seryl-[protein] + ATP = O-phospho-L-seryl-[protein] + ADP + H(+). It carries out the reaction L-threonyl-[protein] + ATP = O-phospho-L-threonyl-[protein] + ADP + H(+). The sequence is that of Cysteine-rich receptor-like protein kinase 40 (CRK40) from Arabidopsis thaliana (Mouse-ear cress).